A 542-amino-acid polypeptide reads, in one-letter code: Glucans biosynthesis protein G (542 aa).

The signal sequence occupies residues 1–34 (MVSLLRCPSSKPYSSLICSLTLGAVVALSGVAYA).

It belongs to the OpgD/OpgG family.

The protein resides in the periplasm. It participates in glycan metabolism; osmoregulated periplasmic glucan (OPG) biosynthesis. Its function is as follows. Involved in the biosynthesis of osmoregulated periplasmic glucans (OPGs). The chain is Glucans biosynthesis protein G from Shewanella baltica (strain OS155 / ATCC BAA-1091).